The chain runs to 173 residues: 6,7-dimethyl-8-ribityllumazine synthase (173 aa).

5-amino-6-(D-ribitylamino)uracil contacts are provided by residues tyrosine 34, 65-67 (ALE), and 94-96 (CVI). Residue 99-100 (ET) coordinates (2S)-2-hydroxy-3-oxobutyl phosphate. Histidine 102 acts as the Proton donor in catalysis. Asparagine 127 is a 5-amino-6-(D-ribitylamino)uracil binding site. (2S)-2-hydroxy-3-oxobutyl phosphate is bound at residue arginine 141.

It belongs to the DMRL synthase family.

It carries out the reaction (2S)-2-hydroxy-3-oxobutyl phosphate + 5-amino-6-(D-ribitylamino)uracil = 6,7-dimethyl-8-(1-D-ribityl)lumazine + phosphate + 2 H2O + H(+). It participates in cofactor biosynthesis; riboflavin biosynthesis; riboflavin from 2-hydroxy-3-oxobutyl phosphate and 5-amino-6-(D-ribitylamino)uracil: step 1/2. Catalyzes the formation of 6,7-dimethyl-8-ribityllumazine by condensation of 5-amino-6-(D-ribitylamino)uracil with 3,4-dihydroxy-2-butanone 4-phosphate. This is the penultimate step in the biosynthesis of riboflavin. This Methylorubrum extorquens (strain CM4 / NCIMB 13688) (Methylobacterium extorquens) protein is 6,7-dimethyl-8-ribityllumazine synthase.